The primary structure comprises 172 residues: Zinc finger C2HC domain-containing protein 1B (172 aa).

C2HC/C3H-type zinc fingers lie at residues 14–43 (KLFP…VFNK) and 117–146 (DYIQ…QTSR). Positions 18, 21, 33, 37, 121, 124, 136, and 140 each coordinate Zn(2+).

Belongs to the ZC2HC1 family. Requires Zn(2+) as cofactor.

The protein is Zinc finger C2HC domain-containing protein 1B (Zc2hc1b) of Mus musculus (Mouse).